The primary structure comprises 448 residues: ATP-dependent RNA helicase sub2 (448 aa).

Residues 19-29 show a composition bias toward low complexity; sequence DAAATTAAPAA. The disordered stretch occupies residues 19–43; sequence DAAATTAAPAANGAQDKKGDLTVSG. The short motif at 58-86 is the Q motif element; sequence TGFRDFLLKGELLRAITDCGFEHPSEVQQ. The 183-residue stretch at 89–271 folds into the Helicase ATP-binding domain; sequence IPTAILNVDV…KKFMRNPLEV (183 aa). Residue 102 to 109 coordinates ATP; it reads AKSGLGKT. Positions 211–214 match the DECD box motif; sequence DECD. A Helicase C-terminal domain is found at 283 to 444; it reads GLQQYYIKLS…EYPEGGVDSS (162 aa).

Belongs to the DEAD box helicase family. DECD subfamily.

It localises to the nucleus. The catalysed reaction is ATP + H2O = ADP + phosphate + H(+). In terms of biological role, ATP-binding RNA helicase involved in transcription elongation and required for the export of mRNA out of the nucleus. SUB2 also plays a role in pre-mRNA splicing and spliceosome assembly. May be involved in rDNA and telomeric silencing, and maintenance of genome integrity. The polypeptide is ATP-dependent RNA helicase sub2 (sub2) (Aspergillus fumigatus (strain ATCC MYA-4609 / CBS 101355 / FGSC A1100 / Af293) (Neosartorya fumigata)).